Here is a 139-residue protein sequence, read N- to C-terminus: MNPSSVFLIVVATVAICLIVIQVYYIYENYDNIKEFNSTHSLLEYSKTINVFSLDRRIYDPNDHVHDVKQKWRCVNYDNNYVSVSIFGFKSDSGKNIKNFSTVDDCIDYTFSKSTHSNIFNPCINEDKSKDCNFLKSVL.

Residues 1 to 21 (MNPSSVFLIVVATVAICLIVI) traverse the membrane as a helical; Signal-anchor for type II membrane protein segment. At 22 to 139 (QVYYIYENYD…KDCNFLKSVL (118 aa)) the chain is on the virion surface side.

Belongs to the poxviridae A28 protein family. Post-translationally, contains two intramolecular disulfide bonds. They are created by the viral disulfide bond formation pathway, a poxvirus-specific pathway that operates on the cytoplasmic side of the MV membranes.

Its subcellular location is the virion membrane. Envelope protein required for virus entry into host cell and for cell-cell fusion (syncytium formation). The chain is Envelope protein A28 homolog from Homo sapiens (Human).